Reading from the N-terminus, the 559-residue chain is Aminopeptidase Q (559 aa).

Over 1-13 the chain is Cytoplasmic; sequence MSRPFSSGVYVSR. A helical; Signal-anchor for type II membrane protein transmembrane segment spans residues 14-34; that stretch reads GVALLLAALTAVLLLVLVALA. Residues 35 to 559 are Lumenal-facing; it reads SLYGSCAHVQ…VPFRHFLAEH (525 aa). N-linked (GlcNAc...) asparagine glycans are attached at residues Asn-121 and Asn-129. Glu-237 lines the substrate pocket. Asn-258, Asn-285, and Asn-343 each carry an N-linked (GlcNAc...) asparagine glycan. 376-380 contacts substrate; sequence GAMEN. Position 412 (His-412) interacts with Zn(2+). Residue Glu-413 is the Proton acceptor of the active site. Zn(2+) contacts are provided by His-416 and Glu-435.

This sequence belongs to the peptidase M1 family. As to quaternary structure, homodimer. The cofactor is Zn(2+). N-glycosylated.

Its subcellular location is the membrane. Its activity is regulated as follows. Inhibited by bestatin. Metalloprotease which may be important for placentation by regulating biological activity of key peptides at the embryo-maternal interface. On synthetic substrates it shows a marked preference for Leu-4-methylcoumaryl-7-amide (Leu-MCA) over Met-MCA, Arg-LCA and Lys-LCA. Cleaves the N-terminal amino acid of several peptides such as angiotensin-3, kisspeptin-10 and endokinin C. The protein is Aminopeptidase Q of Mus musculus (Mouse).